The chain runs to 513 residues: Alpha-amylase mde5 (513 aa).

The signal sequence occupies residues M1–A25. C52 and C60 are oxidised to a cystine. W105 lines the substrate pocket. N143 lines the Ca(2+) pocket. H144 lines the substrate pocket. N162 carries an N-linked (GlcNAc...) asparagine glycan. Residues C171 and C184 are joined by a disulfide bond. Ca(2+)-binding residues include E182 and D195. Residue R224 coordinates substrate. D226, H230, and E250 together coordinate Ca(2+). Catalysis depends on D226, which acts as the Nucleophile. A substrate-binding site is contributed by K229 to H230. E250 serves as the catalytic Proton donor. G254 lines the substrate pocket. A disulfide bond links C260 and C304. D318 contributes to the substrate binding site. A glycan (N-linked (GlcNAc...) asparagine) is linked at N357. R365 contacts substrate. A disulfide bridge links C454 with C488.

It belongs to the glycosyl hydrolase 13 family. Requires Ca(2+) as cofactor.

It localises to the endoplasmic reticulum. The catalysed reaction is Endohydrolysis of (1-&gt;4)-alpha-D-glucosidic linkages in polysaccharides containing three or more (1-&gt;4)-alpha-linked D-glucose units.. The protein is Alpha-amylase mde5 (mde5) of Schizosaccharomyces pombe (strain 972 / ATCC 24843) (Fission yeast).